The primary structure comprises 445 residues: Phosphoglucosamine mutase (445 aa).

The active-site Phosphoserine intermediate is the serine 99. Residues serine 99, aspartate 242, aspartate 244, and aspartate 246 each contribute to the Mg(2+) site. Serine 99 is modified (phosphoserine).

It belongs to the phosphohexose mutase family. It depends on Mg(2+) as a cofactor. In terms of processing, activated by phosphorylation.

It carries out the reaction alpha-D-glucosamine 1-phosphate = D-glucosamine 6-phosphate. In terms of biological role, catalyzes the conversion of glucosamine-6-phosphate to glucosamine-1-phosphate. This chain is Phosphoglucosamine mutase, found in Nitratiruptor sp. (strain SB155-2).